Consider the following 353-residue polypeptide: Photosystem II protein D1 (353 aa).

Thr-2 carries the N-acetylthreonine modification. At Thr-2 the chain carries Phosphothreonine. 3 helical membrane passes run 29-46 (YIGW…TATS), 118-133 (HFLL…EWEL), and 142-156 (WIAV…AATA). His-118 is a chlorophyll a binding site. Tyr-126 contributes to the pheophytin a binding site. Residues Asp-170 and Glu-189 each coordinate [CaMn4O5] cluster. A helical transmembrane segment spans residues 197 to 218 (FHMLGVAGVFGGSLFSAMHGSL). His-198 provides a ligand contact to chlorophyll a. Residues His-215 and 264 to 265 (SF) each bind a quinone. Fe cation is bound at residue His-215. His-272 lines the Fe cation pocket. The helical transmembrane segment at 274–288 (FLAAWPVVGIWFTAL) threads the bilayer. Residues His-332, Glu-333, Asp-342, and Ala-344 each coordinate [CaMn4O5] cluster. The propeptide occupies 345-353 (AIEAPSTNG).

It belongs to the reaction center PufL/M/PsbA/D family. PSII is composed of 1 copy each of membrane proteins PsbA, PsbB, PsbC, PsbD, PsbE, PsbF, PsbH, PsbI, PsbJ, PsbK, PsbL, PsbM, PsbT, PsbX, PsbY, PsbZ, Psb30/Ycf12, at least 3 peripheral proteins of the oxygen-evolving complex and a large number of cofactors. It forms dimeric complexes. The D1/D2 heterodimer binds P680, chlorophylls that are the primary electron donor of PSII, and subsequent electron acceptors. It shares a non-heme iron and each subunit binds pheophytin, quinone, additional chlorophylls, carotenoids and lipids. D1 provides most of the ligands for the Mn4-Ca-O5 cluster of the oxygen-evolving complex (OEC). There is also a Cl(-1) ion associated with D1 and D2, which is required for oxygen evolution. The PSII complex binds additional chlorophylls, carotenoids and specific lipids. is required as a cofactor. Tyr-161 forms a radical intermediate that is referred to as redox-active TyrZ, YZ or Y-Z. Post-translationally, C-terminally processed by CTPA; processing is essential to allow assembly of the oxygen-evolving complex and thus photosynthetic growth.

The protein localises to the plastid. Its subcellular location is the chloroplast thylakoid membrane. It carries out the reaction 2 a plastoquinone + 4 hnu + 2 H2O = 2 a plastoquinol + O2. Functionally, photosystem II (PSII) is a light-driven water:plastoquinone oxidoreductase that uses light energy to abstract electrons from H(2)O, generating O(2) and a proton gradient subsequently used for ATP formation. It consists of a core antenna complex that captures photons, and an electron transfer chain that converts photonic excitation into a charge separation. The D1/D2 (PsbA/PsbD) reaction center heterodimer binds P680, the primary electron donor of PSII as well as several subsequent electron acceptors. This chain is Photosystem II protein D1, found in Citrus sinensis (Sweet orange).